Reading from the N-terminus, the 514-residue chain is Peptide chain release factor 3 (514 aa).

Residues 8-268 enclose the tr-type G domain; the sequence is KKRRTFAIIS…TFLKFAPEPH (261 aa). Residues 17–24, 85–89, and 139–142 each bind GTP; these read SHPDAGKT, DTPGH, and NKLD.

This sequence belongs to the TRAFAC class translation factor GTPase superfamily. Classic translation factor GTPase family. PrfC subfamily.

It is found in the cytoplasm. Increases the formation of ribosomal termination complexes and stimulates activities of RF-1 and RF-2. It binds guanine nucleotides and has strong preference for UGA stop codons. It may interact directly with the ribosome. The stimulation of RF-1 and RF-2 is significantly reduced by GTP and GDP, but not by GMP. This chain is Peptide chain release factor 3, found in Streptococcus thermophilus (strain ATCC BAA-491 / LMD-9).